A 325-amino-acid chain; its full sequence is MDSPSNATVPCGFLLQGFSEFPHLRPVLFLLLLGVHLATLGGNLLILVAVASMPSRQPMLLFLCQLSAIELCYTLVVVPRSLVDLSTPGHRRGSPISFLSCAFQMQMFVALGGAECFLLAAMAYDRYVAICHPLRYAAVVTPGLCARLALACCLRGLAVSVGLTVAIFHLPFCGSRLLLHFFCDITALLHLACTRSYADELPLLGACLVLLLLPSVLILASYGAIAAALRRLRCPKGRGKAASTCALHLAVTFLHYGCATFMYVRPRASYSPRLDRTLALVYTNVTPLLCPLIYSLRNREITAALSRVLGRRRPGQAPGGDLREL.

Residues 1-26 (MDSPSNATVPCGFLLQGFSEFPHLRP) are Extracellular-facing. The N-linked (GlcNAc...) asparagine glycan is linked to Asn-6. Residues 27 to 47 (VLFLLLLGVHLATLGGNLLIL) form a helical membrane-spanning segment. Over 48 to 57 (VAVASMPSRQ) the chain is Cytoplasmic. Residues 58-78 (PMLLFLCQLSAIELCYTLVVV) form a helical membrane-spanning segment. Residues 79 to 101 (PRSLVDLSTPGHRRGSPISFLSC) lie on the Extracellular side of the membrane. The helical transmembrane segment at 102–122 (AFQMQMFVALGGAECFLLAAM) threads the bilayer. Topologically, residues 123-147 (AYDRYVAICHPLRYAAVVTPGLCAR) are cytoplasmic. A helical transmembrane segment spans residues 148–168 (LALACCLRGLAVSVGLTVAIF). Over 169-171 (HLP) the chain is Extracellular. Residues 172–192 (FCGSRLLLHFFCDITALLHLA) traverse the membrane as a helical segment. Residues 193–200 (CTRSYADE) are Cytoplasmic-facing. A helical transmembrane segment spans residues 201-221 (LPLLGACLVLLLLPSVLILAS). Over 222 to 243 (YGAIAAALRRLRCPKGRGKAAS) the chain is Extracellular. The chain crosses the membrane as a helical span at residues 244-264 (TCALHLAVTFLHYGCATFMYV). The Cytoplasmic segment spans residues 265–325 (RPRASYSPRL…QAPGGDLREL (61 aa)).

Belongs to the G-protein coupled receptor 1 family.

It localises to the cell membrane. Its function is as follows. Odorant receptor. In Homo sapiens (Human), this protein is Olfactory receptor 10AC1 (OR10AC1).